Consider the following 457-residue polypeptide: GTPase Der (457 aa).

2 EngA-type G domains span residues 4-169 and 177-352; these read PTIA…PENN and IMMS…NQHR. GTP-binding positions include 10 to 17, 57 to 61, 120 to 123, 183 to 190, 230 to 234, and 295 to 298; these read GRPNVGKS, DTGGL, NKCE, DTAGI, and NKWD. The KH-like domain maps to 353–438; that stretch reads RRVTTSVVNE…PLILLWRGKQ (86 aa).

It belongs to the TRAFAC class TrmE-Era-EngA-EngB-Septin-like GTPase superfamily. EngA (Der) GTPase family. Associates with the 50S ribosomal subunit.

Functionally, GTPase that plays an essential role in the late steps of ribosome biogenesis. The protein is GTPase Der of Prochlorococcus marinus (strain AS9601).